The primary structure comprises 469 residues: Tetratricopeptide repeat protein 38 (469 aa).

The residue at position 2 (A2) is an N-acetylalanine. Phosphoserine is present on S5. TPR repeat units lie at residues 108-141, 180-213, and 252-285; these read REQL…HPTD, SYVK…NPTD, and CHNY…SLQA.

The protein belongs to the TTC38 family.

This Homo sapiens (Human) protein is Tetratricopeptide repeat protein 38 (TTC38).